The following is a 388-amino-acid chain: Probable Na(+)/H(+) antiporter 3 (388 aa).

A run of 12 helical transmembrane segments spans residues 2 to 22 (ESYY…PNLL), 27 to 47 (IPAI…GLNI), 53 to 73 (TLKI…GLEV), 81 to 101 (EFKN…VGGY), 102 to 122 (LIGQ…VIFA), 146 to 166 (IILS…SVVI), 175 to 195 (VGTF…AIPS), 215 to 235 (VLFI…HPIV), 263 to 283 (AIGY…ETNI), 294 to 314 (LLLI…FIAL), 325 to 345 (TIGG…ASIG), and 354 to 374 (EIFV…PIVV).

This sequence belongs to the monovalent cation:proton antiporter 1 (CPA1) transporter (TC 2.A.36) family.

It is found in the cell membrane. In terms of biological role, this is probably a Na(+)/H(+) antiporter. The protein is Probable Na(+)/H(+) antiporter 3 of Methanocaldococcus jannaschii (strain ATCC 43067 / DSM 2661 / JAL-1 / JCM 10045 / NBRC 100440) (Methanococcus jannaschii).